The primary structure comprises 225 residues: Putative ankyrin repeat protein RBE_1025 (225 aa).

ANK repeat units lie at residues 6 to 35, 41 to 71, 75 to 120, and 124 to 153; these read LSKD…AINP, NGKT…NVNI, TGFT…DVNI, and KGNT…SPFI.

This is Putative ankyrin repeat protein RBE_1025 from Rickettsia bellii (strain RML369-C).